The sequence spans 182 residues: Ribosome maturation factor RimP (182 aa).

The protein belongs to the RimP family.

It localises to the cytoplasm. Functionally, required for maturation of 30S ribosomal subunits. The polypeptide is Ribosome maturation factor RimP (Chloroherpeton thalassium (strain ATCC 35110 / GB-78)).